A 217-amino-acid polypeptide reads, in one-letter code: Pyrrolidone-carboxylate peptidase (217 aa).

Catalysis depends on residues glutamate 78, cysteine 141, and histidine 168.

It belongs to the peptidase C15 family. In terms of assembly, homotetramer.

Its subcellular location is the cytoplasm. The catalysed reaction is Release of an N-terminal pyroglutamyl group from a polypeptide, the second amino acid generally not being Pro.. Its function is as follows. Removes 5-oxoproline from various penultimate amino acid residues except L-proline. The sequence is that of Pyrrolidone-carboxylate peptidase from Treponema denticola (strain ATCC 35405 / DSM 14222 / CIP 103919 / JCM 8153 / KCTC 15104).